Reading from the N-terminus, the 519-residue chain is Exodeoxyribonuclease 7 large subunit (519 aa).

The tract at residues 500–519 (VGRGKTRKPKEEPPAQGSLL) is disordered.

It belongs to the XseA family. Heterooligomer composed of large and small subunits.

It localises to the cytoplasm. The enzyme catalyses Exonucleolytic cleavage in either 5'- to 3'- or 3'- to 5'-direction to yield nucleoside 5'-phosphates.. In terms of biological role, bidirectionally degrades single-stranded DNA into large acid-insoluble oligonucleotides, which are then degraded further into small acid-soluble oligonucleotides. The chain is Exodeoxyribonuclease 7 large subunit from Cereibacter sphaeroides (strain ATCC 17029 / ATH 2.4.9) (Rhodobacter sphaeroides).